A 190-amino-acid chain; its full sequence is Putative triphosphatase YjbK (190 aa).

The CYTH domain maps to 4–189; that stretch reads EIEIEFKNML…LRFYEEKRKS (186 aa).

The chain is Putative triphosphatase YjbK (yjbK) from Bacillus subtilis (strain 168).